Consider the following 589-residue polypeptide: Phenylalanine--tRNA ligase beta subunit (589 aa).

A B5 domain is found at 302–379; the sequence is LPYRKEMVRA…IAYGYNNIQM (78 aa). Positions 357, 363, 366, and 367 each coordinate Mg(2+).

Belongs to the phenylalanyl-tRNA synthetase beta subunit family. Type 2 subfamily. Heterotetramer; dimer of two heterodimers formed by FARSA and FARSB. The cofactor is Mg(2+).

The protein resides in the cytoplasm. The enzyme catalyses tRNA(Phe) + L-phenylalanine + ATP = L-phenylalanyl-tRNA(Phe) + AMP + diphosphate + H(+). This Mus musculus (Mouse) protein is Phenylalanine--tRNA ligase beta subunit (Farsb).